Consider the following 325-residue polypeptide: MAQQIVLTNTVKDSQLGQRLDQAIAELFADFSRSRLKEWLLDGKVQVNGEVVTKPRTKVMGGEEITLQAELEDEERWEAQDIPLDIVYEDDDIIVINKPRDFVVHPGAGTPDGTVLNALLHHYPDIAEVPRAGIVHRLDKDTTGLMVVAKTVPAQTRLVRALQKRNITREYEAIAIGRMTAGGKVDQPIGRHSTKRTLMAVAPLGKPAVTHYRVAEHFREHTRIRLRLETGRTHQIRVHMSYLQHPLLGDTAYGGRARIPTGASQELTDMIRGFDRQALHAVMLRFEHPITGEELEFHAPVPDDMVAMTEALRKDTEEYGLPDEF.

Residues 18 to 91 enclose the S4 RNA-binding domain; the sequence is QRLDQAIAEL…IPLDIVYEDD (74 aa). Asp-139 is an active-site residue.

The protein belongs to the pseudouridine synthase RluA family.

The protein localises to the cytoplasm. It carries out the reaction uridine(1911/1915/1917) in 23S rRNA = pseudouridine(1911/1915/1917) in 23S rRNA. Functionally, responsible for synthesis of pseudouridine from uracil at positions 1911, 1915 and 1917 in 23S ribosomal RNA. In Vibrio parahaemolyticus serotype O3:K6 (strain RIMD 2210633), this protein is Ribosomal large subunit pseudouridine synthase D (rluD).